Reading from the N-terminus, the 115-residue chain is Movement protein TGB2 (115 aa).

The Cytoplasmic segment spans residues 1-13; sequence MSAQGHRLTAPVN. Residues 14-34 traverse the membrane as a helical segment; that stretch reads SEKVYIVLGLSFALISITFLL. Residues 35 to 74 lie on the Lumenal side of the membrane; it reads SRNNLPHVGDNIHSLPHGDAYRDGTKAILYNSPNFGSRTS. The helical transmembrane segment at 75 to 95 threads the bilayer; the sequence is LNNSKNAAFAAVLLLSLLIYG. At 96–115 the chain is on the cytoplasmic side; it reads SRCLSQRNHLCACGNNHSSN.

It belongs to the Tymovirales TGBp2 protein family.

It is found in the host endoplasmic reticulum membrane. In terms of biological role, plays a role in viral cell-to-cell propagation, by facilitating genome transport to neighboring plant cells through plasmosdesmata,. The polypeptide is Movement protein TGB2 (Potato virus X (strain HB) (PVX)).